The primary structure comprises 277 residues: Collectin-10 (277 aa).

The N-terminal stretch at methionine 1–glycine 27 is a signal peptide. Asparagine 11 is a glycosylation site (N-linked (GlcNAc...) asparagine). The interval threonine 41–lysine 103 is disordered. A Collagen-like domain is found at serine 45 to lysine 103. A compositionally biased stretch (basic and acidic residues) spans lysine 49–valine 67. Residues threonine 155–glutamate 271 enclose the C-type lectin domain. 2 cysteine pairs are disulfide-bonded: cysteine 176-cysteine 270 and cysteine 248-cysteine 262. N-linked (GlcNAc...) asparagine glycosylation occurs at asparagine 258.

Belongs to the COLEC10/COLEC11 family. In terms of tissue distribution, expressed mainly in the liver and stomach, but also in muscles, testes, and intestines.

It localises to the secreted. It is found in the golgi apparatus. The protein resides in the cytoplasm. Lectin that binds to various sugars: galactose &gt; mannose = fucose &gt; N-acetylglucosamine &gt; N-acetylgalactosamine. Acts as a chemoattractant, probably involved in the regulation of cell migration. This Mus musculus (Mouse) protein is Collectin-10 (Colec10).